The following is a 259-amino-acid chain: Protein CDI (259 aa).

A coiled-coil region spans residues 236–259 (FADLWLNEMEEYNKENKKEADNAK).

As to expression, mostly expressed in pollen grains and pollen tubes, and, at low levels, in seedlings, roots, stems, leaves, flowers and siliques.

It localises to the cytoplasm. It is found in the cytosol. In terms of biological role, probable nucleotide-diphospho-sugar transferase required for pollen germination and tube growth. The polypeptide is Protein CDI (Arabidopsis thaliana (Mouse-ear cress)).